Here is a 530-residue protein sequence, read N- to C-terminus: Tryptophan 7-halogenase RebH (530 aa).

FAD-binding residues include G13, T15, A16, A39, D41, E49, and A50. K79 is an active-site residue. FAD-binding residues include V197 and T348. E357 provides a ligand contact to L-tryptophan. 2 residues coordinate chloride: T359 and G360. FAD is bound at residue I361. Residues Y454, Y455, E461, and F465 each contribute to the L-tryptophan site.

The protein belongs to the flavin-dependent halogenase family. Bacterial tryptophan halogenase subfamily. Homodimer.

It catalyses the reaction L-tryptophan + FADH2 + chloride + O2 = 7-chloro-L-tryptophan + FAD + 2 H2O. Its function is as follows. Involved in the biosynthesis of the indolocarbazole antitumor agent rebeccamycin. Catalyzes the chlorination of tryptophan (Trp) at C7 position to yield 7-chlorotryptophan. It is also able to use bromide ions to generate monobrominated Trp. The polypeptide is Tryptophan 7-halogenase RebH (rebH) (Lentzea aerocolonigenes (Lechevalieria aerocolonigenes)).